Reading from the N-terminus, the 302-residue chain is UDP-N-acetylenolpyruvoylglucosamine reductase (302 aa).

One can recognise an FAD-binding PCMH-type domain in the interval 29-192 (KVGGPVDLLA…VAVTLQLSED (164 aa)). The active site involves Arg-172. Residue Ser-221 is the Proton donor of the active site. Residue Glu-291 is part of the active site.

This sequence belongs to the MurB family. It depends on FAD as a cofactor.

The protein resides in the cytoplasm. It catalyses the reaction UDP-N-acetyl-alpha-D-muramate + NADP(+) = UDP-N-acetyl-3-O-(1-carboxyvinyl)-alpha-D-glucosamine + NADPH + H(+). It functions in the pathway cell wall biogenesis; peptidoglycan biosynthesis. Cell wall formation. The sequence is that of UDP-N-acetylenolpyruvoylglucosamine reductase from Trichlorobacter lovleyi (strain ATCC BAA-1151 / DSM 17278 / SZ) (Geobacter lovleyi).